The primary structure comprises 239 residues: 2,3,4,5-tetrahydropyridine-2,6-dicarboxylate N-acetyltransferase (239 aa).

This sequence belongs to the transferase hexapeptide repeat family. DapH subfamily.

It carries out the reaction (S)-2,3,4,5-tetrahydrodipicolinate + acetyl-CoA + H2O = L-2-acetamido-6-oxoheptanedioate + CoA. Its pathway is amino-acid biosynthesis; L-lysine biosynthesis via DAP pathway; LL-2,6-diaminopimelate from (S)-tetrahydrodipicolinate (acetylase route): step 1/3. Catalyzes the transfer of an acetyl group from acetyl-CoA to tetrahydrodipicolinate. This chain is 2,3,4,5-tetrahydropyridine-2,6-dicarboxylate N-acetyltransferase, found in Staphylococcus aureus (strain JH9).